We begin with the raw amino-acid sequence, 96 residues long: Sec-independent protein translocase protein TatA (96 aa).

The chain crosses the membrane as a helical span at residues 1-21 (MGFSSIWHWIIVLVVVLLLFG). The segment at 42-96 (GMADDEDDEAASVSAERRGIEDGKPAQTIYPPQQPQQPQQPPQQPPVHRDDAPRG) is disordered. Residues 56-65 (AERRGIEDGK) show a composition bias toward basic and acidic residues. Pro residues predominate over residues 73–86 (PQQPQQPQQPPQQP).

This sequence belongs to the TatA/E family. As to quaternary structure, the Tat system comprises two distinct complexes: a TatABC complex, containing multiple copies of TatA, TatB and TatC subunits, and a separate TatA complex, containing only TatA subunits. Substrates initially bind to the TatABC complex, which probably triggers association of the separate TatA complex to form the active translocon.

It localises to the cell inner membrane. Functionally, part of the twin-arginine translocation (Tat) system that transports large folded proteins containing a characteristic twin-arginine motif in their signal peptide across membranes. TatA could form the protein-conducting channel of the Tat system. This is Sec-independent protein translocase protein TatA from Rhodospirillum rubrum (strain ATCC 11170 / ATH 1.1.1 / DSM 467 / LMG 4362 / NCIMB 8255 / S1).